The primary structure comprises 297 residues: Homeobox protein HMX3 (297 aa).

2 disordered regions span residues 24 to 43 and 96 to 172; these read NSDSKPSKPKPILAPTKAGL and AAQK…RKKK. Basic and acidic residues-rich tracts occupy residues 109–123 and 145–166; these read TDRDSPELVLKSDPD and EDGKKEGGIDDWKKSDDGADKK. The homeobox DNA-binding region spans 170–229; that stretch reads KKKTRTVFSRSQVFQLESTFDMKRYLSSSERAGLAASLHLTETQVKIWFQNRRNKWKRQL.

This sequence belongs to the HMX homeobox family. As to expression, expressed in the ear placode and vesicle and in cells forming the vestibulo-acoustic ganglion. Also expressed in the lateral line.

The protein localises to the nucleus. Transcription factor involved in specification of neuronal cell types and which is required for inner ear and hypothalamus development. Binds to the 5'-CAAGTG-3' core sequence. This Danio rerio (Zebrafish) protein is Homeobox protein HMX3 (hmx3).